The primary structure comprises 204 residues: Imidazoleglycerol-phosphate dehydratase (204 aa).

Belongs to the imidazoleglycerol-phosphate dehydratase family.

It is found in the cytoplasm. It carries out the reaction D-erythro-1-(imidazol-4-yl)glycerol 3-phosphate = 3-(imidazol-4-yl)-2-oxopropyl phosphate + H2O. Its pathway is amino-acid biosynthesis; L-histidine biosynthesis; L-histidine from 5-phospho-alpha-D-ribose 1-diphosphate: step 6/9. The chain is Imidazoleglycerol-phosphate dehydratase from Corynebacterium urealyticum (strain ATCC 43042 / DSM 7109).